The following is a 140-amino-acid chain: Profilin (140 aa).

S2 carries the post-translational modification N-acetylserine.

It belongs to the profilin family. In terms of assembly, occurs in many kinds of cells as a complex with monomeric actin in a 1:1 ratio.

Its subcellular location is the cytoplasm. The protein localises to the cytoskeleton. In terms of biological role, binds to actin and affects the structure of the cytoskeleton. At high concentrations, profilin prevents the polymerization of actin, whereas it enhances it at low concentrations. By binding to PIP2, it inhibits the formation of IP3 and DG. In Clypeaster japonicus (Sand dollar), this protein is Profilin.